Reading from the N-terminus, the 100-residue chain is Large ribosomal subunit protein bL27 (100 aa).

The propeptide occupies 1-9 (MLKMNLQLF).

It belongs to the bacterial ribosomal protein bL27 family. The N-terminus is cleaved by ribosomal processing cysteine protease Prp.

The chain is Large ribosomal subunit protein bL27 from Clostridium perfringens (strain ATCC 13124 / DSM 756 / JCM 1290 / NCIMB 6125 / NCTC 8237 / Type A).